Reading from the N-terminus, the 325-residue chain is Melanocortin receptor 5 (325 aa).

At 1–37 (MNSSFHLHFLDLGLNTTDGNLSGLSVQNASSLCEDMG) the chain is on the extracellular side. Residues Asn2, Asn15, Asn20, and Asn28 are each glycosylated (N-linked (GlcNAc...) asparagine). Residues 38 to 61 (IAVEVFLALGLISLLENILVIGAI) traverse the membrane as a helical segment. At 62–73 (VRNRNLHTPMYF) the chain is on the cytoplasmic side. Residues 74-97 (FVGSLAVADMLVSLSNSWETITIY) form a helical membrane-spanning segment. The Extracellular portion of the chain corresponds to 98–114 (LLTNKHLVMADASVRHL). A helical membrane pass occupies residues 115 to 138 (DNVFDSMICISVVASMCSLLAIAV). At 139-155 (DRYVTIFCALRYQRIMT) the chain is on the cytoplasmic side. The helical transmembrane segment at 156–179 (GRRSGAIIGGIWAFCASCGTVFIV) threads the bilayer. Residues 180–186 (YYESTYV) lie on the Extracellular side of the membrane. A helical transmembrane segment spans residues 187–211 (VICLIAMFLTMLLLMASLYTHMFLL). Topologically, residues 212–239 (ARTHIRRIATLPGHSSVRQRTGVKGAIT) are cytoplasmic. Residues 240 to 265 (LAMLLGVFIVCWAPFFLHLILMISCP) form a helical membrane-spanning segment. The Extracellular segment spans residues 266-273 (HNLYCSCF). A helical membrane pass occupies residues 274 to 297 (MSHFNMYLILIMCNSVIDPLIYAF). The Cytoplasmic portion of the chain corresponds to 298–325 (RSQEMRKTFKEIVCFQSFRTPCRFPSRY). Cys311 carries the S-palmitoyl cysteine lipid modification.

The protein belongs to the G-protein coupled receptor 1 family.

It is found in the cell membrane. Its function is as follows. Receptor for MSH (alpha, beta and gamma) and ACTH. The activity of this receptor is mediated by G proteins which activate adenylate cyclase. This receptor is a possible mediator of the immunomodulation properties of melanocortins. The protein is Melanocortin receptor 5 (MC5R) of Bos taurus (Bovine).